The sequence spans 572 residues: Mitochondrial distribution and morphology protein 34 (572 aa).

One can recognise an SMP-LTD domain in the interval 1–195 (MAFNFNWSPL…LPAIIHRLSL (195 aa)). Disordered regions lie at residues 208–236 (LQTQ…VDAL), 296–405 (PSDQ…CSAP), 455–518 (RDTA…PFIN), and 551–572 (NACG…AYGH). A compositionally biased stretch (polar residues) spans 296-347 (PSDQTDASGGVTSPFSPVLSRTQSQVGSMSSFPDSASMVSNQSRSSTPSHTF). Over residues 358 to 370 (RHSKAHARKRKKR) the composition is skewed to basic residues. The segment covering 371–381 (VVDLRRPKTTD) has biased composition (basic and acidic residues). Polar residues-rich tracts occupy residues 387–401 (SDES…TPSI) and 498–511 (ATGS…QLPS).

It belongs to the MDM34 family. Component of the ER-mitochondria encounter structure (ERMES) or MDM complex, composed of mmm1, mdm10, mdm12 and mdm34.

Its subcellular location is the mitochondrion outer membrane. Its function is as follows. Component of the ERMES/MDM complex, which serves as a molecular tether to connect the endoplasmic reticulum (ER) and mitochondria. Components of this complex are involved in the control of mitochondrial shape and protein biogenesis, and function in nonvesicular lipid trafficking between the ER and mitochondria. Mdm34 is required for the interaction of the ER-resident membrane protein mmm1 and the outer mitochondrial membrane-resident beta-barrel protein mdm10. The protein is Mitochondrial distribution and morphology protein 34 of Neosartorya fischeri (strain ATCC 1020 / DSM 3700 / CBS 544.65 / FGSC A1164 / JCM 1740 / NRRL 181 / WB 181) (Aspergillus fischerianus).